The primary structure comprises 95 residues: Opiscorpine-3 (95 aa).

Residues 1–19 (MNNKLTALIFLGLLAIASC) form the signal peptide. Positions 55–95 (EFMCVANVDMTKSCDTHCQKASGEKGYCHGTKCKCGVPLSY) constitute a BetaSPN-type CS-alpha/beta domain. 3 disulfides stabilise this stretch: Cys-58–Cys-82, Cys-68–Cys-87, and Cys-72–Cys-89.

Belongs to the long chain scorpion toxin family. Class 3 subfamily. In terms of tissue distribution, expressed by the venom gland.

The protein resides in the secreted. In terms of biological role, has antimicrobial activity against yeasts and bacteria. The protein is Opiscorpine-3 of Opistophthalmus carinatus (African yellow leg scorpion).